Reading from the N-terminus, the 2179-residue chain is Genome polyprotein (2179 aa).

Disordered stretches follow at residues 503–531 (FSKD…PTGD), 623–678 (QPQK…YPIQ), 703–738 (RAKK…GDQF), and 753–847 (EPSV…PPKM). Composition is skewed to polar residues over residues 630 to 642 (DTPS…QPFH) and 659 to 678 (TTFA…YPIQ). Polar residues predominate over residues 758–770 (SEDTSSQSYISTE). Residues 783–806 (SEESTQLSQLSSSSNDSPENNENT) are compositionally biased toward low complexity. The segment covering 819 to 831 (EISEVEDEVDGMT) has biased composition (acidic residues). The CCHC-type zinc-finger motif lies at 1112–1125 (CFTCGKIGHFSRNC). Asp1226 serves as the catalytic For protease activity; shared with dimeric partner. A Reverse transcriptase domain is found at 1409–1591 (QQFDLIEPSD…NKIQFLGMDF (183 aa)). Residues Asp1479, Asp1542, and Asp1543 each coordinate Mg(2+). 3 disordered regions span residues 1822-1848 (QRRT…KLSH), 2114-2144 (NIVK…KNKC), and 2160-2179 (YSTK…EPCV). The segment covering 1827–1840 (SSSTKSKADSSQST) has biased composition (low complexity). Basic residues predominate over residues 2120–2144 (PRKRKGKAKSRSSTRSEKRRAKNKC). Residues 2162–2179 (TKPSTPSWTQDSSSEPCV) are compositionally biased toward polar residues.

Belongs to the Petuviruses genome polyprotein family.

It carries out the reaction DNA(n) + a 2'-deoxyribonucleoside 5'-triphosphate = DNA(n+1) + diphosphate. Functionally, encodes presumably for at least four polypeptides: Movement protein (MP), capsid protein (CP), Protease (PR), and reverse transcriptase (RT). In Petunia vein clearing virus (isolate Shepherd) (PVCV), this protein is Genome polyprotein.